The sequence spans 532 residues: MSSLCASNCYPSSSSINLFSNNNNPTKPFLLSLRFASSNSLPFVAPLKFSTTNHVLSNSRFSSNRIQRRLFLLRCVSEESQPSLSIGNGGSEERVNVLVIGGGGREHALCHALKRSPSCDSVLCAPGNAGISSSGDATCVPDLDISDSLAVISFCQKWNVGLVVVGPEVPLVAGLANDLVKAGILTFGPSSQAAALEGSKNFMKNLCHKYNIPTAKYKTFSDASAAKEYIQEQGAPIVIKADGLAAGKGVTVAMELEEAFEAVDSMLVKGVFGSAGCQVVVEEFLEGEEASFFALVDGENAIPLESAQDHKRVGDGDTGPNTGGMGAYSPAPVLTKELQDFVMESIIHPTVKGMAEEGCKFVGVLFAGLMIEKKSGLPKLIEFNVRFGDPECQVLMMRLESDLAKVLLAACKGELSGVSLDWSKDSAMVVVMASNGYPGSYEKGSIIKNLEEAERVAPGVKVFHAGTGLDSEGNVVATGGRVLGVTAKGKDLEEARERAYSAVQQINWPGGFFRHDIGWRALRQKQVATKEE.

A chloroplast-targeting transit peptide spans 1–75 (MSSLCASNCY…IQRRLFLLRC (75 aa)). In terms of domain architecture, ATP-grasp spans 204-412 (KNLCHKYNIP…LAKVLLAACK (209 aa)).

This sequence belongs to the GARS family.

It is found in the plastid. The protein resides in the chloroplast. It carries out the reaction 5-phospho-beta-D-ribosylamine + glycine + ATP = N(1)-(5-phospho-beta-D-ribosyl)glycinamide + ADP + phosphate + H(+). It participates in purine metabolism; IMP biosynthesis via de novo pathway; N(1)-(5-phospho-D-ribosyl)glycinamide from 5-phospho-alpha-D-ribose 1-diphosphate: step 2/2. In Arabidopsis thaliana (Mouse-ear cress), this protein is Phosphoribosylamine--glycine ligase, chloroplastic (PUR2).